Here is a 265-residue protein sequence, read N- to C-terminus: RWD domain-containing protein 3 (265 aa).

Residues 7 to 114 (EEVAALSAIY…WTQQNLNNLI (108 aa)) form the RWD domain.

The protein resides in the nucleus. The protein localises to the cytoplasm. In terms of biological role, enhancer of SUMO conjugation. Increases SUMO conjugation to proteins by promoting the: binding of E1 and E2 enzymes, thioester linkage between SUMO and ube2i/ubc9 and transfer of SUMO to specific target proteins which include hif1a, pias, nfkbia, nr3c1 and top1. Has no effect on ubiquitination. The polypeptide is RWD domain-containing protein 3 (rwdd3) (Xenopus tropicalis (Western clawed frog)).